Consider the following 479-residue polypeptide: Aspartyl/glutamyl-tRNA(Asn/Gln) amidotransferase subunit B (479 aa).

This sequence belongs to the GatB/GatE family. GatB subfamily. In terms of assembly, heterotrimer of A, B and C subunits.

It carries out the reaction L-glutamyl-tRNA(Gln) + L-glutamine + ATP + H2O = L-glutaminyl-tRNA(Gln) + L-glutamate + ADP + phosphate + H(+). The catalysed reaction is L-aspartyl-tRNA(Asn) + L-glutamine + ATP + H2O = L-asparaginyl-tRNA(Asn) + L-glutamate + ADP + phosphate + 2 H(+). Allows the formation of correctly charged Asn-tRNA(Asn) or Gln-tRNA(Gln) through the transamidation of misacylated Asp-tRNA(Asn) or Glu-tRNA(Gln) in organisms which lack either or both of asparaginyl-tRNA or glutaminyl-tRNA synthetases. The reaction takes place in the presence of glutamine and ATP through an activated phospho-Asp-tRNA(Asn) or phospho-Glu-tRNA(Gln). The protein is Aspartyl/glutamyl-tRNA(Asn/Gln) amidotransferase subunit B of Geobacter sulfurreducens (strain ATCC 51573 / DSM 12127 / PCA).